Here is a 902-residue protein sequence, read N- to C-terminus: Nuclear factor of activated T-cells, cytoplasmic 4 (902 aa).

Disordered stretches follow at residues 16–180 and 208–369; these read VFGE…SSWS and RFGL…GGSR. Over residues 50–81 the composition is skewed to pro residues; it reads EPPPYGAAPIGIPRPPPPRPGMHSPPPRPAPS. A compositionally biased stretch (gly residues) spans 96 to 109; it reads GGPGGGAGGAGGGR. Positions 114-119 are calcineurin-binding; sequence PSIRIT. Positions 151–165 are enriched in gly residues; sequence GFGGYREAGGQGGGA. Over residues 166-180 the composition is skewed to low complexity; it reads FFSPSPGSSSLSSWS. 2 positions are modified to phosphoserine; by MAPK7 and MAPK14: serine 168 and serine 170. Phosphoserine; by MAPK8 and MAPK9 occurs at positions 213 and 217. An SP 1 repeat occupies 213–229; that stretch reads SPLPSPRASPRPWTPED. Residues 213 to 293 form a 2 approximate SP repeats region; the sequence is SPLPSPRASP…LSRRGSLGEE (81 aa). Composition is skewed to pro residues over residues 215-227 and 254-263; these read LPSP…PWTP and GPTPASPRPA. The short motif at 268 to 270 is the Nuclear localization signal element; it reads KRR. Residues 272–288 are compositionally biased toward low complexity; it reads SSSGTPSSASPALSRRG. One copy of the SP 2; approximate repeat lies at 277–293; that stretch reads PSSASPALSRRGSLGEE. 2 positions are modified to phosphoserine; by RPS6KA3: serine 289 and serine 344. In terms of domain architecture, RHD spans 401–582; it reads SALPPLDWPL…VPIECSQRSA (182 aa). Residues 430 to 437 mediate DNA binding; sequence RAHYETEG. Residues 586 to 683 form the IPT/TIG domain; the sequence is PQVEAYSPSA…KRSPTQSFRF (98 aa). The Nuclear localization signal motif lies at 672 to 674; it reads RRK. Lysine 689 participates in a covalent cross-link: Glycyl lysine isopeptide (Lys-Gly) (interchain with G-Cter in SUMO2). The interval 791-870 is disordered; sequence PYGGRGSSFS…GGYSSGFRDS (80 aa). The span at 805–824 shows a compositional bias: pro residues; sequence FSPPAPFRPPPLPASPPLEG.

As to quaternary structure, member of the multicomponent NFATC transcription complex that consists of at least two components, a pre-existing cytoplasmic component NFATC2 and an inducible nuclear component NFATC1. Other NFAT proteins, such as NFATC3, or members of the activating protein-1 (AP-1) family and MAF can also bind the complex. NFAT proteins can bind DNA as monomers or dimers. Component of a promoter-binding complex composed of STAT3, NFATC3 and NFATC4; complex formation is enhanced by calcineurin. Interacts with CREBBP; this interaction potentiates transcription activation. Interacts with MAPK8/JNK1 and MAPK9/JNK2. Interacts with GATA4 (via the second Zn finger). Interacts (via N-terminus) with IRAK1 (via C-terminus). Interacts with RPS6KA3. Interacts with HOMER1, HOMER2 and HOMER3; this interaction competes with calcineurin/PPP3CA-binding and hence prevents NFATC4 dephosphorylation and activation. Interacts with ESR1 and ESR2; this interaction decreases NFATC4 transcriptional activity. Interacts with MTOR and MAPK7/ERK5. Interacts with TRIM17; this interaction prevents NFATC3 nuclear localization. Interacts with TCF25 (via C-terminus); the interaction leads to suppression of NFATC4 transcription factor activity and is reduced following stimulation with angiotensin-2. Phosphorylated by NFATC-kinases; dephosphorylated by calcineurin/PPP3CA. Phosphorylated on Ser-168 and Ser-170 by MTOR, IRAK1, MAPK7/ERK5 and MAPK14/p38, on Ser-213 and Ser-217 by MAPK8/JNK1 and MAPK9/JNK2, and on Ser-289 and Ser-344 by RPS6KA3. Phosphorylated by GSK3B. Phosphorylation by GSK3B markedly increases NFATC4 ubiquitination. Phosphorylation at Ser-168 and Ser-170 is stimulated by UV irradiation. Phosphorylation determines subcellular location: the hyperphosphorylated protein is cytosolic, while the dephosphorylated form is targeted to the nucleus. Post-translationally, ubiquitinated, leading to degradation by the proteasome. Ubiquitination may be stimulated by GSK3B-dependent phosphorylation. Polyubiquitin linkage mainly occurs through 'Lys-48'. Widely expressed, with high levels in placenta, lung, kidney, testis and ovary. Weakly expressed in spleen and thymus. In the hippocampus, expressed in the granular layer of the dentate gyrus, in the pyramidal neurons of CA3 region, and in the hippocampal fissure. Expressed in the heart (at protein level).

The protein localises to the cytoplasm. Its subcellular location is the nucleus. With respect to regulation, transcriptional activity may be repressed by ESR1 and ESR2. Its function is as follows. Ca(2+)-regulated transcription factor that is involved in several processes, including the development and function of the immune, cardiovascular, musculoskeletal, and nervous systems. Involved in T-cell activation, stimulating the transcription of cytokine genes, including that of IL2 and IL4. Along with NFATC3, involved in embryonic heart development. Following JAK/STAT signaling activation and as part of a complex with NFATC3 and STAT3, binds to the alpha-beta E4 promoter region of CRYAB and activates transcription in cardiomyocytes. Involved in mitochondrial energy metabolism required for cardiac morphogenesis and function. Transactivates many genes involved in the cardiovascular system, including AGTR2, NPPB/BNP (in synergy with GATA4), NPPA/ANP/ANF and MYH7/beta-MHC. Involved in the regulation of adult hippocampal neurogenesis. Involved in BDNF-driven pro-survival signaling in hippocampal adult-born neurons. Involved in the formation of long-term spatial memory and long-term potentiation. In cochlear nucleus neurons, may play a role in deafferentation-induced apoptosis during the developmental critical period, when auditory neurons depend on afferent input for survival. Binds to and activates the BACE1/Beta-secretase 1 promoter, hence may regulate the proteolytic processing of the amyloid precursor protein (APP). Plays a role in adipocyte differentiation. May be involved in myoblast differentiation into myotubes. Binds the consensus DNA sequence 5'-GGAAAAT-3'. In the presence of CREBBP, activates TNF transcription. Binds to PPARG gene promoter and regulates its activity. Binds to PPARG and REG3G gene promoters. This is Nuclear factor of activated T-cells, cytoplasmic 4 (NFATC4) from Homo sapiens (Human).